A 95-amino-acid chain; its full sequence is Aspartyl/glutamyl-tRNA(Asn/Gln) amidotransferase subunit C (95 aa).

Belongs to the GatC family. In terms of assembly, heterotrimer of A, B and C subunits.

The enzyme catalyses L-glutamyl-tRNA(Gln) + L-glutamine + ATP + H2O = L-glutaminyl-tRNA(Gln) + L-glutamate + ADP + phosphate + H(+). The catalysed reaction is L-aspartyl-tRNA(Asn) + L-glutamine + ATP + H2O = L-asparaginyl-tRNA(Asn) + L-glutamate + ADP + phosphate + 2 H(+). In terms of biological role, allows the formation of correctly charged Asn-tRNA(Asn) or Gln-tRNA(Gln) through the transamidation of misacylated Asp-tRNA(Asn) or Glu-tRNA(Gln) in organisms which lack either or both of asparaginyl-tRNA or glutaminyl-tRNA synthetases. The reaction takes place in the presence of glutamine and ATP through an activated phospho-Asp-tRNA(Asn) or phospho-Glu-tRNA(Gln). In Azorhizobium caulinodans (strain ATCC 43989 / DSM 5975 / JCM 20966 / LMG 6465 / NBRC 14845 / NCIMB 13405 / ORS 571), this protein is Aspartyl/glutamyl-tRNA(Asn/Gln) amidotransferase subunit C.